The sequence spans 394 residues: Elongation factor Tu 2 (394 aa).

In terms of domain architecture, tr-type G spans 10-204 (KPHVNVGTIG…ALDSYIPEPE (195 aa)). A G1 region spans residues 19–26 (GHVDHGKT). 19-26 (GHVDHGKT) serves as a coordination point for GTP. Residue Thr-26 participates in Mg(2+) binding. Residues 60-64 (GITIS) form a G2 region. The G3 stretch occupies residues 81–84 (DCPG). GTP is bound by residues 81–85 (DCPGH) and 136–139 (NKCD). The G4 stretch occupies residues 136–139 (NKCD). Residues 174–176 (SAL) form a G5 region.

It belongs to the TRAFAC class translation factor GTPase superfamily. Classic translation factor GTPase family. EF-Tu/EF-1A subfamily. In terms of assembly, monomer.

The protein localises to the cytoplasm. The catalysed reaction is GTP + H2O = GDP + phosphate + H(+). Its function is as follows. GTP hydrolase that promotes the GTP-dependent binding of aminoacyl-tRNA to the A-site of ribosomes during protein biosynthesis. The protein is Elongation factor Tu 2 of Photorhabdus laumondii subsp. laumondii (strain DSM 15139 / CIP 105565 / TT01) (Photorhabdus luminescens subsp. laumondii).